The following is a 683-amino-acid chain: Cyclic nucleotide-gated channel alpha-1 (683 aa).

Over 1–160 the chain is Cytoplasmic; sequence MKTNIINTWH…PSGNMYYNWL (160 aa). The tract at residues 34-144 is disordered; that stretch reads ACSSFSDNDN…PKEKKEEEKK (111 aa). The segment covering 105 to 144 has biased composition (basic and acidic residues); it reads SKADDKKESKKDPEKKKKKEKEKEKKKEEKPKEKKEEEKK. A helical membrane pass occupies residues 161-182; it reads FCITLPVMYNWTMIIARACFDE. Residues 183–192 lie on the Extracellular side of the membrane; it reads LQSDYLEYWL. The chain crosses the membrane as a helical span at residues 193–213; the sequence is IFDYVSDVVYLADMFVRTRTG. Residues 214–238 lie on the Cytoplasmic side of the membrane; that stretch reads YLEQGLLVKDELKLIEKYKANLQFK. Residues 239 to 257 traverse the membrane as a helical segment; that stretch reads LDVLSVIPTDLLYFKFGWN. At 258–262 the chain is on the extracellular side; sequence YPEIR. A helical membrane pass occupies residues 263–281; that stretch reads LNRLLRISRMFEFFQRTET. The Cytoplasmic portion of the chain corresponds to 282-288; sequence RTNYPNI. Residues 286–394 are ion conduction pathway; that stretch reads PNIFRISNLV…GNIGSMISNM (109 aa). Residues 289-312 form a helical membrane-spanning segment; it reads FRISNLVMYIVIIIHWNACVYYSI. Residues 313 to 335 lie on the Extracellular side of the membrane; sequence SKAIGFGNDTWVYPDVNDPEFGR. The N-linked (GlcNAc...) asparagine glycan is linked to N320. Helical transmembrane passes span 336–370 and 371–395; these read LARKYVYSLYWSTLTLTTIGETPPPVLDSEYVFVV and VDFLIGVLIFATIVGNIGSMISNMN. A selectivity filter region spans residues 353–356; that stretch reads TIGE. Residues 396-472 are C-linker; the sequence is AARAEFQSRV…DTLKKVRIFA (77 aa). Residues 396 to 683 lie on the Cytoplasmic side of the membrane; that stretch reads AARAEFQSRV…ESEPTESLQG (288 aa). The cyclic nucleotide-binding domain stretch occupies residues 476–596; that stretch reads AGLLVELVLK…EEKGRQILMK (121 aa). Residues G536, S539, R552, and T553 each coordinate 3',5'-cyclic GMP. 3',5'-cyclic AMP-binding residues include R552 and T553. A coiled-coil region spans residues 614–668; the sequence is LEEKVTRMEGSVDLLQTRFARILAEYESMQQKLKQRLTKVEKFLKPLIETEFSAL.

The protein belongs to the cyclic nucleotide-gated cation channel (TC 1.A.1.5) family. CNGA1 subfamily. In terms of assembly, forms heterotetrameric channels composed of CNGA1 and CNGB1 subunits with 3:1 stoichiometry. May also form cyclic nucleotide-activated homotetrameric channels, that are efficiently activated by saturating cGMP, but poorly activated by saturating cAMP compared to the heterotetramer with CNGB1. The channel binds Ca(2+)-bound CALM1 via CaM1 and CaM2 regions of the CNGB1 subunit; this interaction modulates the affinity of the channel for cNMPs in response to intracellular Ca(2+) levels. Rod cells in the retina.

The protein localises to the cell membrane. It carries out the reaction Ca(2+)(in) = Ca(2+)(out). The enzyme catalyses Na(+)(in) = Na(+)(out). It catalyses the reaction K(+)(in) = K(+)(out). The catalysed reaction is NH4(+)(in) = NH4(+)(out). It carries out the reaction Rb(+)(in) = Rb(+)(out). The enzyme catalyses Li(+)(in) = Li(+)(out). It catalyses the reaction Cs(+)(in) = Cs(+)(out). Its function is as follows. Pore-forming subunit of the rod cyclic nucleotide-gated channel. Mediates rod photoresponses at dim light converting transient changes in intracellular cGMP levels into electrical signals. In the dark, cGMP levels are high and keep the channel open enabling a steady inward current carried by Na(+) and Ca(2+) ions that leads to membrane depolarization and neurotransmitter release from synaptic terminals. Upon photon absorption cGMP levels decline leading to channel closure and membrane hyperpolarization that ultimately slows neurotransmitter release and signals the presence of light, the end point of the phototransduction cascade. Conducts cGMP- and cAMP-gated ion currents, with permeability for monovalent and divalent cations. The selectivity for Ca(2+) over Na(+) increases with cGMP concentrations, whereas the selectivity among monovalent ions is independent of the cGMP levels. This Rattus norvegicus (Rat) protein is Cyclic nucleotide-gated channel alpha-1.